Reading from the N-terminus, the 1244-residue chain is MMETERLVLPPLDPLNLPLRALEVGCTGRWELLNVPGPPESTLPHGLPPCAPDLCQEAEQLFLSSPAWLPLHGVEHSARKWQRKTDPWSLLAAVETPVPSDLQAQRHPTTGHILGYKEVLLENTNLSATTSLSLRRPPGPASQSLWGNPTQYPFWPGGMDEPSITDLHTREEAEEEIDFEKDLLTVPPGFKKGVDFAPKDHPAPVPGLLSLSRLLEPLDLSGGDEDEGEAAGGPRGDNASPSPSGTPLVRASSLEDLVLKEAATVVSTPEPPKPPPQEQWAVPVDVTSPVGDFYRLIPQPAFQWAFEPDVFQKQAILHLEQHDSVFVAAHTSAGKTVVAEYAIALAQKHMTRTIYTSPIKALSNQKFRDFRNTFGDVGLLTGDVQLHPEASCLIMTTEILRSMLYSGSDVIRDLEWVIFDEVHYINDAERGVVWEEVLIMLPEHVSIILLSATVPNALEFADWIGRLKRRQIYVISTVARPVPLEHYLFTGNSPKTQGELFLLLDSRGAFHTQGYYAAVEAKKERMSKHAQTFGAKQPTHQGGPAQDRGVYLSLLASLRTRAQLPVVVFTFSRGRCDEQASGLTSLDLTTSSEKSEIHLFLQRCLARLRGSDRQLPQVLHMSELLRRGLGVHHSGILPILKEIVEMLFSRGLVKVLFATETFAMGVNMPARTVVFDSMRKHDGSTFRDLLPGEYVQMAGRAGRRGLDPTGTVILLCKGRVPEMADLHRMMMGKPSQLQSQFRLTYTMILNLLRVDALRVEDMMKRSFSEFPSRKDSKAHEQALADLTKRLGALEEPDVTGQLADLPEYYSWAEELTETQNMIQRRIMESVNGLKSLSVGRVVVVKNEEHHNALGVILQVSSNSTSRVFTTLVLCDKPVVSDNPRDKGPATPDVPHPDDLIGFKLFLPEGPCEHTVAKLQPGDVAAISTKVLRVNGEKISEDFSKRQQPKFRKDPPLAAVTTAVQELLRLAQSYPAGPPTLDPINDLQLKDVAVVEGGLRARKLEELIRGAQCVHSPRFPAQYVKLRERMQIQKEMERLRFLLSDQSLLLLPEYHQRVEVLRTLGYVDEAGTVKLAGRVACAMSSHELLLTELMFDNALSALRPEEIAALLSGLVCQSPGDPGDQLPSTLKQGVERVKAVAKRIGEVQVACGLNQTVEEFVGELNFGLVEVVYEWARGMPFSELAGLSGTPEGLVVRCIQRLAEMCRSLRGAARLVGEPVLGAKMETAATLLRRDIVFAASLYTQ.

Residues 218–249 (LDLSGGDEDEGEAAGGPRGDNASPSPSGTPLV) are disordered. Phosphoserine is present on residues S242 and S253. In terms of domain architecture, Helicase ATP-binding spans 316–472 (ILHLEQHDSV…WIGRLKRRQI (157 aa)). An ATP-binding site is contributed by 329-336 (AHTSAGKT). A DEVH box motif is present at residues 420–423 (DEVH). The Helicase C-terminal domain maps to 582–752 (GLTSLDLTTS…LTYTMILNLL (171 aa)).

The protein belongs to the helicase family. SKI2 subfamily. As to quaternary structure, component of the SKI complex which consists of SKIC2, SKIC3 and SKIC8. Interacts with HBS1L isoform 2.

The protein localises to the nucleus. Its subcellular location is the cytoplasm. It catalyses the reaction ATP + H2O = ADP + phosphate + H(+). In terms of biological role, helicase component of the SKI complex, a multiprotein complex that assists the RNA-degrading exosome during the mRNA decay and quality-control pathways. The SKI complex catalyzes mRNA extraction from 80S ribosomal complexes in the 3'-5' direction and channels mRNA to the cytosolic exosome for degradation. SKI-mediated extraction of mRNA from stalled ribosomes allow binding of the Pelota-HBS1L complex and subsequent ribosome disassembly by ABCE1 for ribosome recycling. In the nucleus, the SKI complex associates with transcriptionally active genes in a manner dependent on PAF1 complex (PAF1C). This chain is Superkiller complex protein 2, found in Mus musculus (Mouse).